A 283-amino-acid polypeptide reads, in one-letter code: 4-hydroxy-tetrahydrodipicolinate reductase (283 aa).

NAD(+) is bound by residues 15 to 20 (GALGRM) and 116 to 118 (GTT). The Proton donor/acceptor role is filled by His-172. Residue His-173 coordinates (S)-2,3,4,5-tetrahydrodipicolinate. Catalysis depends on Lys-176, which acts as the Proton donor. 182 to 183 (GT) provides a ligand contact to (S)-2,3,4,5-tetrahydrodipicolinate.

Belongs to the DapB family.

It localises to the cytoplasm. The catalysed reaction is (S)-2,3,4,5-tetrahydrodipicolinate + NAD(+) + H2O = (2S,4S)-4-hydroxy-2,3,4,5-tetrahydrodipicolinate + NADH + H(+). It carries out the reaction (S)-2,3,4,5-tetrahydrodipicolinate + NADP(+) + H2O = (2S,4S)-4-hydroxy-2,3,4,5-tetrahydrodipicolinate + NADPH + H(+). Its pathway is amino-acid biosynthesis; L-lysine biosynthesis via DAP pathway; (S)-tetrahydrodipicolinate from L-aspartate: step 4/4. Its function is as follows. Catalyzes the conversion of 4-hydroxy-tetrahydrodipicolinate (HTPA) to tetrahydrodipicolinate. The chain is 4-hydroxy-tetrahydrodipicolinate reductase from Prochlorococcus marinus (strain MIT 9313).